A 154-amino-acid polypeptide reads, in one-letter code: 6,7-dimethyl-8-ribityllumazine synthase (154 aa).

Residues Phe22, 56–58 (AFE), and 80–82 (AVI) each bind 5-amino-6-(D-ribitylamino)uracil. (2S)-2-hydroxy-3-oxobutyl phosphate is bound at residue 85 to 86 (AT). Residue His88 is the Proton donor of the active site. Phe113 is a binding site for 5-amino-6-(D-ribitylamino)uracil. Arg127 is a binding site for (2S)-2-hydroxy-3-oxobutyl phosphate.

This sequence belongs to the DMRL synthase family. Forms an icosahedral capsid composed of 60 subunits, arranged as a dodecamer of pentamers.

It catalyses the reaction (2S)-2-hydroxy-3-oxobutyl phosphate + 5-amino-6-(D-ribitylamino)uracil = 6,7-dimethyl-8-(1-D-ribityl)lumazine + phosphate + 2 H2O + H(+). The protein operates within cofactor biosynthesis; riboflavin biosynthesis; riboflavin from 2-hydroxy-3-oxobutyl phosphate and 5-amino-6-(D-ribitylamino)uracil: step 1/2. In terms of biological role, catalyzes the formation of 6,7-dimethyl-8-ribityllumazine by condensation of 5-amino-6-(D-ribitylamino)uracil with 3,4-dihydroxy-2-butanone 4-phosphate. This is the penultimate step in the biosynthesis of riboflavin. The polypeptide is 6,7-dimethyl-8-ribityllumazine synthase (Geobacillus kaustophilus (strain HTA426)).